Here is a 275-residue protein sequence, read N- to C-terminus: DNA-directed RNA polymerase subunit Rpo3 (275 aa).

Belongs to the archaeal Rpo3/eukaryotic RPB3 RNA polymerase subunit family. Part of the RNA polymerase complex.

The protein localises to the cytoplasm. It carries out the reaction RNA(n) + a ribonucleoside 5'-triphosphate = RNA(n+1) + diphosphate. In terms of biological role, DNA-dependent RNA polymerase (RNAP) catalyzes the transcription of DNA into RNA using the four ribonucleoside triphosphates as substrates. This chain is DNA-directed RNA polymerase subunit Rpo3, found in Methanopyrus kandleri (strain AV19 / DSM 6324 / JCM 9639 / NBRC 100938).